The chain runs to 305 residues: Mas-related G-protein coupled receptor member A2B (305 aa).

Residues 1-17 are Extracellular-facing; sequence MDETLPGSINIRILIPK. Residues 18–38 form a helical membrane-spanning segment; sequence LMIIIFGLVGLMGNAIVFWLL. The Cytoplasmic segment spans residues 39–53; that stretch reads GFHLRRNAFSVYILN. Residues 54 to 74 form a helical membrane-spanning segment; it reads LALADFLFLLSSIIASTLFLL. Residues 75-78 lie on the Extracellular side of the membrane; that stretch reads KVSY. A helical transmembrane segment spans residues 79–99; that stretch reads LSIIFHLCFNTIMMVVYITGI. Residues 100-132 lie on the Cytoplasmic side of the membrane; it reads SMLSAISTECCLSVLCPTWYRCHRPVHTSTVMC. Residues 133–153 traverse the membrane as a helical segment; it reads AVIWVLSLLICILNSYFCAVL. The Extracellular portion of the chain corresponds to 154-167; it reads HTRYDNDNECLATN. A helical transmembrane segment spans residues 168 to 188; sequence IFTASYMIFLLVVLCLSSLAL. Over 189 to 207 the chain is Cytoplasmic; the sequence is LARLFCGAGQMKLTRFHVT. A helical membrane pass occupies residues 208–228; sequence ILLTLLVFLLCGLPFVIYCIL. The Extracellular portion of the chain corresponds to 229–244; it reads LFKIKDDFHVLDVNFY. Residues 245–265 traverse the membrane as a helical segment; the sequence is LALEVLTAINSCANPIIYFFV. Over 266 to 305 the chain is Cytoplasmic; it reads GSFRHQLKHQTLKMVLQSALQDTPETAENMVEMSSNKAEP.

It belongs to the G-protein coupled receptor 1 family. Mas subfamily. In terms of tissue distribution, expressed in a subset of sensory neurons that includes nociceptors. Expressed in the subclass of non-peptidergic sensory neurons that are IB4(+) and VR1(-).

Its subcellular location is the cell membrane. Its function is as follows. Orphan receptor. May be a receptor for RFamide-family neuropeptides such as NPFF and NPAF, which are analgesic in vivo. May regulate nociceptor function and/or development, including the sensation or modulation of pain. This is Mas-related G-protein coupled receptor member A2B from Mus musculus (Mouse).